A 581-amino-acid polypeptide reads, in one-letter code: Spastin (581 aa).

Positions 1 to 12 (MSSPAGRRKKKG) are enriched in basic residues. The segment at 1–39 (MSSPAGRRKKKGSGGASPAPARPPPPAAVPAPAAGPAPA) is disordered. Residues 1–48 (MSSPAGRRKKKGSGGASPAPARPPPPAAVPAPAAGPAPAPGSPHKRNL) form a required for nuclear localization region. At 1 to 54 (MSSPAGRRKKKGSGGASPAPARPPPPAAVPAPAAGPAPAPGSPHKRNLYYFSYP) the chain is on the cytoplasmic side. Residues 1–78 (MSSPAGRRKK…LGLLFVWLCQ (78 aa)) form a required for interaction with ATL1 region. The required for midbody localization stretch occupies residues 1–191 (MSSPAGRRKK…LVMAKDRLQL (191 aa)). The segment at 1–265 (MSSPAGRRKK…GTSKPNRTNK (265 aa)) is required for interaction with RTN1. A Nuclear localization signal motif is present at residues 4 to 11 (PAGRRKKK). Residues 20–39 (PARPPPPAAVPAPAAGPAPA) show a composition bias toward pro residues. The required for interaction with SSNA1 and microtubules stretch occupies residues 48 to 85 (LYYFSYPLVVGFALLRLLACHLGLLFVWLCQRFSRALM). The segment at residues 55-75 (LVVGFALLRLLACHLGLLFVW) is an intramembrane region (helical). Residues 57–65 (VGFALLRLL) carry the Nuclear export signal motif. At 76–581 (LCQRFSRALM…WNKDFGDTTV (506 aa)) the chain is on the cytoplasmic side. The interval 90–111 (SSGTAPAPASPSTPAPGPGGEA) is disordered. Pro residues predominate over residues 97-106 (PASPSTPAPG). The MIT domain occupies 118 to 192 (HKQAFEYISI…VMAKDRLQLL (75 aa)). Residues 193 to 581 (ESGAVPKKKD…WNKDFGDTTV (389 aa)) are sufficient for microtubule severing. Residues 195–277 (GAVPKKKDPL…TPTTAVRKKK (83 aa)) are disordered. The segment covering 206 to 225 (HASNSLPRSKTVMKSGSTGL) has biased composition (polar residues). S210 and S233 each carry phosphoserine. The segment at 235-293 (SGLSMVSGARPGSGPAATTHKGTSKPNRTNKPSTPTTAVRKKKDLKNFRNVDSNLANLI) is required for interaction with microtubules and microtubule severing. A compositionally biased stretch (polar residues) spans 254 to 271 (HKGTSKPNRTNKPSTPTT). Position 271 is a phosphothreonine (T271). The short motif at 274 to 277 (RKKK) is the Nuclear localization signal element. 347 to 354 (GPPGNGKT) lines the ATP pocket. S562 bears the Phosphoserine mark.

It belongs to the AAA ATPase family. Spastin subfamily. As to quaternary structure, homohexamer. Mostly monomeric, but assembles into hexameric structure for short periods of time. Oligomerization seems to be a prerequisite for catalytic activity. Binding to ATP in a cleft between two adjacent subunits stabilizes the homohexameric form. Binds to microtubules at least in part via the alpha-tubulin and beta-tubulin tails. The hexamer adopts a ring conformation through which microtubules pass prior to being severed. Does not interact strongly with tubulin heterodimers. Interacts (via MIT domain) with CHMP1B; the interaction is direct. Interacts with SSNA1. Interacts with ATL1. Interacts with RTN1. Interacts with ZFYVE27. Interacts with REEP1. Interacts (via MIT domain) with IST1.

It is found in the membrane. It localises to the endoplasmic reticulum. The protein localises to the midbody. The protein resides in the cytoplasm. Its subcellular location is the cytoskeleton. It is found in the microtubule organizing center. It localises to the centrosome. The protein localises to the perinuclear region. The protein resides in the nucleus. Its subcellular location is the spindle. It is found in the cell projection. It localises to the axon. The catalysed reaction is n ATP + n H2O + a microtubule = n ADP + n phosphate + (n+1) alpha/beta tubulin heterodimers.. Its activity is regulated as follows. Allosteric enzyme with a cooperative mechanism; at least two neighbor subunits influence each other strongly in spastin hexamers. Microtubule binding promotes cooperative interactions among spastin subunits. Its function is as follows. ATP-dependent microtubule severing protein that specifically recognizes and cuts microtubules that are polyglutamylated. Preferentially recognizes and acts on microtubules decorated with short polyglutamate tails: severing activity increases as the number of glutamates per tubulin rises from one to eight, but decreases beyond this glutamylation threshold. Severing activity is not dependent on tubulin acetylation or detyrosination. Microtubule severing promotes reorganization of cellular microtubule arrays and the release of microtubules from the centrosome following nucleation. It is critical for the biogenesis and maintenance of complex microtubule arrays in axons, spindles and cilia. SPAST is involved in abscission step of cytokinesis and nuclear envelope reassembly during anaphase in cooperation with the ESCRT-III complex. Recruited at the midbody, probably by IST1, and participates in membrane fission during abscission together with the ESCRT-III complex. Recruited to the nuclear membrane by IST1 and mediates microtubule severing, promoting nuclear envelope sealing and mitotic spindle disassembly during late anaphase. Required for membrane traffic from the endoplasmic reticulum (ER) to the Golgi and endosome recycling. Recruited by IST1 to endosomes and regulates early endosomal tubulation and recycling by mediating microtubule severing. Probably plays a role in axon growth and the formation of axonal branches. The polypeptide is Spastin (Rattus norvegicus (Rat)).